Consider the following 114-residue polypeptide: Large ribosomal subunit protein uL22 (114 aa).

This sequence belongs to the universal ribosomal protein uL22 family. Part of the 50S ribosomal subunit.

Its function is as follows. This protein binds specifically to 23S rRNA; its binding is stimulated by other ribosomal proteins, e.g. L4, L17, and L20. It is important during the early stages of 50S assembly. It makes multiple contacts with different domains of the 23S rRNA in the assembled 50S subunit and ribosome. Functionally, the globular domain of the protein is located near the polypeptide exit tunnel on the outside of the subunit, while an extended beta-hairpin is found that lines the wall of the exit tunnel in the center of the 70S ribosome. In Myxococcus xanthus (strain DK1622), this protein is Large ribosomal subunit protein uL22.